A 302-amino-acid chain; its full sequence is MSEDEEKVKLRRLEPAIQKFTKIVIPTDLERLRKHQINIEKYQRCRVWDKLHEEHINAGRTVQQLRSNIREMEKLCLKVRKDDLGLLKRMIDPVKEEASAATAEFLQLHLESVEELKKQFNDEETFLQPSLTRSMTVGGTFHSTEDEADPQSMTQIYALPEIPRDQNAAESWETLEADLIELSQLVTDFSLLVNSQQEKIDSIEDHVNTAAVNVEEGTKNLGKAAKYKLAALPVAGALIGGVVGGPIGLLAGFKVAGIAAALGGGVLGFTGGKLIQRRKQKMMEKLASSCPDLPSQTDKKCS.

An N-acetylserine modification is found at Ser2. At 2-228 (SEDEEKVKLR…KNLGKAAKYK (227 aa)) the chain is on the cytoplasmic side. The residue at position 41 (Lys41) is an N6-acetyllysine. Residues 53 to 123 (EEHINAGRTV…EELKKQFNDE (71 aa)) are a coiled coil. Position 157 is a phosphotyrosine; by ABL1 (Tyr157). In terms of domain architecture, t-SNARE coiled-coil homology spans 162–224 (IPRDQNAAES…EEGTKNLGKA (63 aa)). The chain crosses the membrane as a helical span at residues 229–249 (LAALPVAGALIGGVVGGPIGL). The interval 229 to 275 (LAALPVAGALIGGVVGGPIGLLAGFKVAGIAAALGGGVLGFTGGKLI) is necessary and sufficient for localization to autophagosome. Residues 250-254 (LAGFK) lie on the Lumenal side of the membrane. Residues 255–275 (VAGIAAALGGGVLGFTGGKLI) form a helical membrane-spanning segment. Residues 276-302 (QRRKQKMMEKLASSCPDLPSQTDKKCS) are Cytoplasmic-facing. Ser289 carries the phosphoserine modification. The Endoplasmic reticulum retention signal motif lies at 299–302 (KKCS).

The protein belongs to the syntaxin family. As to quaternary structure, forms a SNARE complex composed of VAMP8, SNAP29 and STX17 involved in fusion of autophagosome with lysosome. May interact with VTI1B. Probably interacts with BET1, SCFD1 and SEC22B. Interacts with PTPN2 and ABL1; involved in STX17 phosphorylation. Interacts with COPB1. Interacts with TMED9 and TMED10; the interaction is direct. Interacts with VAMP7. Interacts with RUBCNL/PACER; promoting targeting of RUBCNL/PACER to autophagosome. Interacts with VAMP8, SNAP29, VPS39 and VPS41; these interactions are increased in the absence of TMEM39A. Interacts with IRGM; promoting STX17 recruitment to autophagosomes. Interacts with ATG8 proteins GABARAP and MAP1LC3B. Interacts with RNF115; this interaction enhances STX17 stability which in turn promotes autophagosome maturation. Interacts with RAB39A (GTP-bound); the interaction promotes autophagosome-lysosome membrane fusion driven by STX17-SNAP29-VAMP8. Interacts with RAB39B; the interaction may promote a different fonction in autophagy as compared with RAB39A. Phosphorylated at Tyr-157 probably by ABL1. Dephosphorylation by PTPN2; regulates exit from the endoplasmic reticulum.

The protein resides in the endoplasmic reticulum membrane. It localises to the smooth endoplasmic reticulum membrane. The protein localises to the endoplasmic reticulum-Golgi intermediate compartment membrane. It is found in the cytoplasmic vesicle. Its subcellular location is the autophagosome membrane. The protein resides in the COPII-coated vesicle membrane. It localises to the cytoplasm. The protein localises to the cytosol. It is found in the mitochondrion membrane. Its subcellular location is the autolysosome membrane. Functionally, SNAREs, soluble N-ethylmaleimide-sensitive factor-attachment protein receptors, are essential proteins for fusion of cellular membranes. SNAREs localized on opposing membranes assemble to form a trans-SNARE complex, an extended, parallel four alpha-helical bundle that drives membrane fusion. STX17 is a SNARE of the autophagosome involved in autophagy through the direct control of autophagosome membrane fusion with the lysosome membrane. May also play a role in the early secretory pathway where it may maintain the architecture of the endoplasmic reticulum-Golgi intermediate compartment/ERGIC and Golgi and/or regulate transport between the endoplasmic reticulum, the ERGIC and the Golgi. This Bos taurus (Bovine) protein is Syntaxin-17.